Consider the following 318-residue polypeptide: Ferredoxin--NADP reductase (318 aa).

FAD-binding residues include Asp33, Gln41, Tyr46, Val84, Phe115, Asp276, and Thr316.

It belongs to the ferredoxin--NADP reductase type 2 family. In terms of assembly, homodimer. FAD serves as cofactor.

It carries out the reaction 2 reduced [2Fe-2S]-[ferredoxin] + NADP(+) + H(+) = 2 oxidized [2Fe-2S]-[ferredoxin] + NADPH. The polypeptide is Ferredoxin--NADP reductase (Lactobacillus johnsonii (strain CNCM I-12250 / La1 / NCC 533)).